The following is a 398-amino-acid chain: 1-deoxy-D-xylulose 5-phosphate reductoisomerase (398 aa).

NADPH contacts are provided by Thr-13, Gly-14, Ser-15, Ile-16, Arg-40, and Asn-127. Lys-128 lines the 1-deoxy-D-xylulose 5-phosphate pocket. Position 129 (Glu-129) interacts with NADPH. Position 153 (Asp-153) interacts with Mn(2+). 1-deoxy-D-xylulose 5-phosphate is bound by residues Ser-154, Glu-155, Ser-188, and His-211. Residue Glu-155 participates in Mn(2+) binding. Gly-217 contacts NADPH. Positions 224, 229, 230, and 233 each coordinate 1-deoxy-D-xylulose 5-phosphate. Position 233 (Glu-233) interacts with Mn(2+).

It belongs to the DXR family. Mg(2+) is required as a cofactor. Mn(2+) serves as cofactor.

It carries out the reaction 2-C-methyl-D-erythritol 4-phosphate + NADP(+) = 1-deoxy-D-xylulose 5-phosphate + NADPH + H(+). The protein operates within isoprenoid biosynthesis; isopentenyl diphosphate biosynthesis via DXP pathway; isopentenyl diphosphate from 1-deoxy-D-xylulose 5-phosphate: step 1/6. Catalyzes the NADPH-dependent rearrangement and reduction of 1-deoxy-D-xylulose-5-phosphate (DXP) to 2-C-methyl-D-erythritol 4-phosphate (MEP). The chain is 1-deoxy-D-xylulose 5-phosphate reductoisomerase from Cellvibrio japonicus (strain Ueda107) (Pseudomonas fluorescens subsp. cellulosa).